The sequence spans 349 residues: Glycosyltransferase 8 domain-containing protein 2 (349 aa).

Residues 1–6 (MALLRK) lie on the Cytoplasmic side of the membrane. Residues 7-24 (INQVLLFLLIVTLCVILY) traverse the membrane as a helical; Signal-anchor for type II membrane protein segment. Topologically, residues 25 to 349 (KKVHKGTVPK…AGIFKLNHHS (325 aa)) are lumenal. N-linked (GlcNAc...) asparagine glycosylation is present at N234.

It belongs to the glycosyltransferase 8 family.

It is found in the membrane. The chain is Glycosyltransferase 8 domain-containing protein 2 (GLT8D2) from Homo sapiens (Human).